The primary structure comprises 472 residues: MSGTSSMGLPPGPRLSGSVQAVLMLRHGLRFLTACQRRYGSVFTLHVAGFGHMVYLSDPAAIKTVFAGNPSVFHAGEANSMLAGLLGDSSLLLIDDDVHRDRRRLMSPPFHRDAVARQAGPIAEIAAANIAGWPMAKAFAVAPKMSEITLEVILRTVIGASDPVRLAALRKVMPRLLNVGPWATLALANPSLLNNRLWSRLRRRIEEADALLYAEIADRRADPDLAARTDTLAMLVRAADEDGRTMTERELRDQLITLLVAGHDTTATGLSWALERLTRHPVTLAKAVQAADASAAGDPAGDEYLDAVAKETLRIRPVVYDVGRVLTEAVEVAGYRLPAGVMVVPAIGLVHASAQLYPDPERFDPDRMVGATLSPTTWLPFGGGNRRCLGATFAMVEMRVVLREILRRVELSTTTTSGERPKLKHVIMVPHRGARIRVRATRDVSATSQATAQGAGCPAARGGGPSRAVGSQ.

Position 388 (Cys388) interacts with heme. Positions 442 to 472 are disordered; sequence RDVSATSQATAQGAGCPAARGGGPSRAVGSQ. Residues 452-472 show a composition bias toward low complexity; the sequence is AQGAGCPAARGGGPSRAVGSQ.

The protein belongs to the cytochrome P450 family. The cofactor is heme.

The chain is Putative cytochrome P450 135B1 (cyp135B1) from Mycobacterium bovis (strain ATCC BAA-935 / AF2122/97).